We begin with the raw amino-acid sequence, 181 residues long: Shikimate kinase 2 (181 aa).

An ATP-binding site is contributed by 12–17; the sequence is GCGKTT. Mg(2+) contacts are provided by threonine 16 and aspartate 32. Residues aspartate 34, arginine 58, and glycine 79 each coordinate substrate. The interval 112-126 is LID domain; it reads EAEPEAELRPTLTGK. Arginine 120 lines the ATP pocket. Arginine 139 is a substrate binding site.

It belongs to the shikimate kinase family. AroL subfamily. Monomer. Mg(2+) serves as cofactor.

It localises to the cytoplasm. The catalysed reaction is shikimate + ATP = 3-phosphoshikimate + ADP + H(+). Its pathway is metabolic intermediate biosynthesis; chorismate biosynthesis; chorismate from D-erythrose 4-phosphate and phosphoenolpyruvate: step 5/7. Functionally, catalyzes the specific phosphorylation of the 3-hydroxyl group of shikimic acid using ATP as a cosubstrate. This chain is Shikimate kinase 2, found in Salmonella schwarzengrund (strain CVM19633).